The sequence spans 160 residues: MAVIKKPDLTDPVLRAKLAKGMGHNYYGEPAWPNDLLYMFPVVIFGSFACVIGLAVLDPAAVGEPANPFATPLEILPEWYFYPTFQLLRTVPNKLLGVLLMAAVPAGLLTVPFIENINKFQNPFRRPIATTVFLIGTFAAIWLGIGACLPIDISLTLGLF.

A run of 3 helical transmembrane segments spans residues leucine 36 to valine 56, leucine 95 to glutamate 115, and threonine 131 to isoleucine 151.

It belongs to the cytochrome b family. PetD subfamily. The 4 large subunits of the cytochrome b6-f complex are cytochrome b6, subunit IV (17 kDa polypeptide, petD), cytochrome f and the Rieske protein, while the 4 small subunits are petG, petL, petM and petN. The complex functions as a dimer.

It localises to the plastid. The protein localises to the chloroplast thylakoid membrane. Its function is as follows. Component of the cytochrome b6-f complex, which mediates electron transfer between photosystem II (PSII) and photosystem I (PSI), cyclic electron flow around PSI, and state transitions. This chain is Cytochrome b6-f complex subunit 4, found in Tupiella akineta (Green alga).